A 141-amino-acid polypeptide reads, in one-letter code: 3-hydroxyacyl-[acyl-carrier-protein] dehydratase FabZ (141 aa).

Residue His-48 is part of the active site.

Belongs to the thioester dehydratase family. FabZ subfamily.

It localises to the cytoplasm. It catalyses the reaction a (3R)-hydroxyacyl-[ACP] = a (2E)-enoyl-[ACP] + H2O. Involved in unsaturated fatty acids biosynthesis. Catalyzes the dehydration of short chain beta-hydroxyacyl-ACPs and long chain saturated and unsaturated beta-hydroxyacyl-ACPs. In Bacillus velezensis (strain DSM 23117 / BGSC 10A6 / LMG 26770 / FZB42) (Bacillus amyloliquefaciens subsp. plantarum), this protein is 3-hydroxyacyl-[acyl-carrier-protein] dehydratase FabZ.